The sequence spans 437 residues: Histidine--tRNA ligase (437 aa).

It belongs to the class-II aminoacyl-tRNA synthetase family. As to quaternary structure, homodimer.

The protein localises to the cytoplasm. It carries out the reaction tRNA(His) + L-histidine + ATP = L-histidyl-tRNA(His) + AMP + diphosphate + H(+). The protein is Histidine--tRNA ligase of Leptospira biflexa serovar Patoc (strain Patoc 1 / Ames).